Consider the following 408-residue polypeptide: MLSEKTIRIVKEITPLVAANAETITRRFYERMFEANPEVKAFFNQAHQHSGGQQKALAGAICAYFTHIDNPAVLMPAVELIAQKHVSLGIKPEHYPIVGSNLLAAIGDVMGDAATPEIVEAVSEAYGFLADIFIGREGAIYEEQASMPGGWNGTRTFVVTKKVRESEIVTSFYLKPEDEGPLPPFKPGQYITVHMDHPHTPTSPRNYSLSDCASQPHYRISVKREERLVPDAPDGLISNHLHDGIEEGHRIELGPPCGEFTVDPATIAKPIVLIAGGIGVTPLLSMAKSIVHANPNAELHFIQAARNSKVHAFADELRRLAQAGPNVHTKVIYDSPLPGDVEEGKCDEAGFVTENQIRESTPFTDADFYFCGPKPFMKNVHSCLRELGVDEHRVRYEFFGPKEELVAV.

Positions 1 to 138 (MLSEKTIRIV…LADIFIGREG (138 aa)) constitute a Globin domain. Residue histidine 85 coordinates heme b. Active-site charge relay system residues include tyrosine 95 and glutamate 137. A reductase region spans residues 149–408 (GGWNGTRTFV…FGPKEELVAV (260 aa)). The region spanning 152-263 (NGTRTFVVTK…GPPCGEFTVD (112 aa)) is the FAD-binding FR-type domain. FAD is bound by residues tyrosine 190 and 205 to 208 (RNYS). 277–282 (GIGVTP) is an NADP(+) binding site. Residue 398 to 401 (FFGP) participates in FAD binding.

Belongs to the globin family. Two-domain flavohemoproteins subfamily. The protein in the C-terminal section; belongs to the flavoprotein pyridine nucleotide cytochrome reductase family. The cofactor is heme b. Requires FAD as cofactor.

The catalysed reaction is 2 nitric oxide + NADPH + 2 O2 = 2 nitrate + NADP(+) + H(+). It carries out the reaction 2 nitric oxide + NADH + 2 O2 = 2 nitrate + NAD(+) + H(+). This chain is Flavohemoprotein, found in Rhodopirellula baltica (strain DSM 10527 / NCIMB 13988 / SH1).